Here is a 99-residue protein sequence, read N- to C-terminus: Malonate decarboxylase acyl carrier protein (99 aa).

Ser25 bears the O-(phosphoribosyl dephospho-coenzyme A)serine mark.

Belongs to the MdcC family. In terms of processing, covalently binds the prosthetic group of malonate decarboxylase.

The protein localises to the cytoplasm. Its function is as follows. Subunit of malonate decarboxylase, it is an acyl carrier protein to which acetyl and malonyl thioester residues are bound via a 2'-(5''-phosphoribosyl)-3'-dephospho-CoA prosthetic group and turn over during the catalytic mechanism. In Azotobacter vinelandii (strain DJ / ATCC BAA-1303), this protein is Malonate decarboxylase acyl carrier protein.